The following is an 839-amino-acid chain: Autophagy-related protein 9A (839 aa).

Positions 1 to 21 (MAQFDTEYQRLEASYSDSPPG) are disordered. N-acetylalanine is present on Ala-2. The Cytoplasmic portion of the chain corresponds to 2-61 (AQFDTEYQRLEASYSDSPPGEEDLLVHVPEGSKSPWHHIENLDLFFSRVYNLHQKNGFTC). Residues 8-11 (YQRL) carry the Tyrosine-based sorting signal motif. Phosphoserine occurs at positions 14, 16, and 18. A helical transmembrane segment spans residues 62-84 (MLIGEIFELMQFLFVVAFTTFLV). Topologically, residues 85-128 (SCVDYDILFANKMVNHSLHPTEPVKVTLPDAFLPAQVCSARIQE) are lumenal. N-linked (GlcNAc...) asparagine glycosylation is present at Asn-99. A helical membrane pass occupies residues 129 to 154 (NGSLITILVIAGVFWVHRLIKFIYNI). At 155–290 (CCYWEIHSFY…ELAQRLSNRI (136 aa)) the chain is on the cytoplasmic side. Residues 291–301 (LWIGIANFLLC) lie within the membrane without spanning it. At 302 to 319 (PLILIWQILYAFFSYAEV) the chain is on the cytoplasmic side. An intramembrane segment occupies 320 to 328 (LKREPGALG). Residues 329–371 (ARCWSLYGRCYLRHFNELEHELQSRLNRGYKPASKYMNCFLSP) are Cytoplasmic-facing. The chain crosses the membrane as a helical span at residues 372-397 (LLTLLAKNCAFFAGSILAVLIALTIY). The Lumenal segment spans residues 398–406 (DEDVLAVEH). Residues 407 to 424 (VLTTVTLLGVTVTVCRSF) traverse the membrane as a helical segment. At 425-470 (IPDQHMVFCPEQLLRVILAHIHYMPDHWQGNAHRSQTRDEFAQLFQ) the chain is on the cytoplasmic side. The stretch at 471–480 (YKAVFILEEL) is an intramembrane region. Topologically, residues 481-483 (LSP) are cytoplasmic. Residues 484–492 (IVTPLILIF) lie within the membrane without spanning it. Over 493–839 (CLRPRALEII…DELPPQVHKV (347 aa)) the chain is Cytoplasmic. 5 positions are modified to phosphoserine: Ser-656, Ser-735, Ser-738, Ser-741, and Ser-828. Disordered stretches follow at residues 656 to 688 (SPLQ…GSSV) and 719 to 839 (QQAQ…VHKV). A compositionally biased stretch (basic and acidic residues) spans 724 to 736 (EPERHVWHRRESD). Acidic residues-rich tracts occupy residues 737–747 (ESGESAPEEGG) and 823–832 (VPEEGSEDEL).

The protein belongs to the ATG9 family. Homotrimer; forms a homotrimer with a central pore that forms a path between the two membrane leaflets. Interacts (via cytoplasmic its C-terminus) with ATG2A. Interacts with SUPT20H. Interacts (via the tyrosine-based sorting signal motif) with AP4M1; promoting association with the AP-4 complex. Interacts with ARFIP1 and ARFIP2. Interacts with PI4K2A and PI4KB. Interacts with ATG4A; the interaction is direct and promotes ATG9A trafficking. In terms of processing, ufmylated in a DDRGK1 dependent manner.

It localises to the preautophagosomal structure membrane. The protein localises to the cytoplasmic vesicle. It is found in the autophagosome membrane. The protein resides in the golgi apparatus. Its subcellular location is the trans-Golgi network membrane. It localises to the late endosome membrane. The protein localises to the recycling endosome membrane. It is found in the endoplasmic reticulum membrane. The protein resides in the mitochondrion membrane. It carries out the reaction a 1,2-diacyl-sn-glycero-3-phosphocholine(in) = a 1,2-diacyl-sn-glycero-3-phosphocholine(out). The enzyme catalyses a 1,2-diacyl-sn-glycero-3-phospho-L-serine(in) = a 1,2-diacyl-sn-glycero-3-phospho-L-serine(out). The catalysed reaction is a 1,2-diacyl-sn-glycero-3-phosphoethanolamine(in) = a 1,2-diacyl-sn-glycero-3-phosphoethanolamine(out). Its function is as follows. Phospholipid scramblase involved in autophagy by mediating autophagosomal membrane expansion. Cycles between the preautophagosomal structure/phagophore assembly site (PAS) and the cytoplasmic vesicle pool and supplies membrane for the growing autophagosome. Lipid scramblase activity plays a key role in preautophagosomal structure/phagophore assembly by distributing the phospholipids that arrive through ATG2 (ATG2A or ATG2B) from the cytoplasmic to the luminal leaflet of the bilayer, thereby driving autophagosomal membrane expansion. Also required to supply phosphatidylinositol 4-phosphate to the autophagosome initiation site by recruiting the phosphatidylinositol 4-kinase beta (PI4KB) in a process dependent on ARFIP2, but not ARFIP1. In addition to autophagy, also plays a role in necrotic cell death. The chain is Autophagy-related protein 9A from Bos taurus (Bovine).